A 793-amino-acid chain; its full sequence is E3 ubiquitin-protein ligase UHRF1 (793 aa).

The 78-residue stretch at 1–78 (MWIQVRTMDG…IQLLVRQSLV (78 aa)) folds into the Ubiquitin-like domain. 4 positions are modified to phosphoserine: serine 76, serine 91, serine 95, and serine 165. The disordered stretch occupies residues 82–124 (STKERDSELSDTDSGCCLGQSESDKSSTHGEAAAETDSRPADE). 2 tudor-like regions span residues 133-209 (GLYK…ARAR) and 216-283 (DLEV…IERP). Lysine 279 is covalently cross-linked (Glycyl lysine isopeptide (Lys-Gly) (interchain with G-Cter in SUMO2)). Position 287 is a phosphoserine (serine 287). The interval 296–301 (RKSGPS) is linker. Phosphoserine; by PKA is present on serine 298. The PHD-type zinc-finger motif lies at 310–366 (NRLCRVCACHLCGGRQDPDKQLMCDECDMAFHIYCLDPPLSSVPSEDEWYCPECRND). 2 histone H3R2me0 binding regions span residues 333–337 (CDECD) and 353–355 (PSE). The residue at position 368 (serine 368) is a Phosphoserine. Lysine 385 participates in a covalent cross-link: Glycyl lysine isopeptide (Lys-Gly) (interchain with G-Cter in SUMO2). Position 399 is an N6-acetyllysine (lysine 399). Residues 419–582 (GPIPGIPVGT…FLVWRYLLRR (164 aa)) enclose the YDG domain. Residues 445-446 (HV) form a required to promote base flipping region. Residues 463–464 (AG) and aspartate 469 contribute to the DNA site. 2 required for formation of a 5-methylcytosine-binding pocket regions span residues 466–469 (YEDD) and 478–481 (YTGS). Residue lysine 546 is modified to N6-acetyllysine; alternate. Lysine 546 participates in a covalent cross-link: Glycyl lysine isopeptide (Lys-Gly) (interchain with G-Cter in SUMO2); alternate. The span at 618–629 (REREKENSKREE) shows a compositional bias: basic and acidic residues. The disordered stretch occupies residues 618–673 (REREKENSKREEEEQQEGGFASPRTGKGKWKRKSAGGGPSRAGSPRRTSKKTKVEP). A Phosphoserine; by CDK1 modification is found at serine 639. The residue at position 651 (serine 651) is a Phosphoserine. Residue lysine 670 forms a Glycyl lysine isopeptide (Lys-Gly) (interchain with G-Cter in SUMO2) linkage. 2 positions are modified to phosphoserine: serine 707 and serine 709. The segment at 724-763 (CICCQELVFRPITTVCQHNVCKDCLDRSFRAQVFSCPACR) adopts an RING-type zinc-finger fold.

As to quaternary structure, interacts with DNMT3A and DNMT3B. Interacts with DNMT1; the interaction is direct. Interacts with USP7; leading to its deubiquitination. Interacts with histone H3. Interacts with HDAC1, but not with HDAC2. Interacts with BLTP3A. Interacts with PML. Interacts with EHMT2. Binds hemimethylated CpG containing oligonucleotides. Interacts with ZNF263; recruited to the SIX3 promoter along with other proteins involved in chromatin modification and transcriptional corepression where it contributes to transcriptional repression. Interacts with UHRF2. Interacts with FANCD2. Interacts with TET1 isoform 2; this interaction induces the recruitment of TET1 isoform 2 to replicating heterochromatin. In terms of processing, phosphorylation at Ser-298 of the linker region decreases the binding to H3K9me3. Phosphorylation at Ser-639 by CDK1 during M phase impairs interaction with USP7, preventing deubiquitination and leading to degradation by the proteasome. Post-translationally, ubiquitinated; which leads to proteasomal degradation. Autoubiquitinated; interaction with USP7 leads to deubiquitination and prevents degradation. Ubiquitination and degradation takes place during M phase, when phosphorylation at Ser-639 prevents interaction with USP7 and subsequent deubiquitination. Polyubiquitination may be stimulated by DNA damage. In terms of tissue distribution, expressed in thymus, bone marrow, testis, lung and heart. Overexpressed in breast cancer.

Its subcellular location is the nucleus. The enzyme catalyses S-ubiquitinyl-[E2 ubiquitin-conjugating enzyme]-L-cysteine + [acceptor protein]-L-lysine = [E2 ubiquitin-conjugating enzyme]-L-cysteine + N(6)-ubiquitinyl-[acceptor protein]-L-lysine.. It functions in the pathway protein modification; protein ubiquitination. Functionally, multidomain protein that acts as a key epigenetic regulator by bridging DNA methylation and chromatin modification. Specifically recognizes and binds hemimethylated DNA at replication forks via its YDG domain and recruits DNMT1 methyltransferase to ensure faithful propagation of the DNA methylation patterns through DNA replication. In addition to its role in maintenance of DNA methylation, also plays a key role in chromatin modification: through its tudor-like regions and PHD-type zinc fingers, specifically recognizes and binds histone H3 trimethylated at 'Lys-9' (H3K9me3) and unmethylated at 'Arg-2' (H3R2me0), respectively, and recruits chromatin proteins. Enriched in pericentric heterochromatin where it recruits different chromatin modifiers required for this chromatin replication. Also localizes to euchromatic regions where it negatively regulates transcription possibly by impacting DNA methylation and histone modifications. Has E3 ubiquitin-protein ligase activity by mediating the ubiquitination of target proteins such as histone H3 and PML. It is still unclear how E3 ubiquitin-protein ligase activity is related to its role in chromatin in vivo. Plays a role in DNA repair by cooperating with UHRF2 to ensure recruitment of FANCD2 to interstrand cross-links (ICLs) leading to FANCD2 activation. Acts as a critical player of proper spindle architecture by catalyzing the 'Lys-63'-linked ubiquitination of KIF11, thereby controlling KIF11 localization on the spindle. In Homo sapiens (Human), this protein is E3 ubiquitin-protein ligase UHRF1 (UHRF1).